Consider the following 148-residue polypeptide: Large ribosomal subunit protein bL9 (148 aa).

It belongs to the bacterial ribosomal protein bL9 family.

Functionally, binds to the 23S rRNA. This is Large ribosomal subunit protein bL9 from Bifidobacterium animalis subsp. lactis (strain AD011).